A 927-amino-acid polypeptide reads, in one-letter code: F-box only protein 11 (927 aa).

The segment at 1–132 is disordered; that stretch reads MNSVRAANRR…STSTTENFGH (132 aa). Over residues 7–16 the composition is skewed to basic residues; it reads ANRRPRRVSR. Residues 17–27 show a composition bias toward low complexity; it reads PRPVQQQQQQP. The segment covering 28–68 has biased composition (pro residues); it reads PQQPPPQPPQQQPPQQQPPPPPQQQQQQQPPPPPPPPPPLP. A compositionally biased stretch (polar residues) spans 114–129; sequence PTKNSMEGASTSTTEN. The F-box domain occupies 153–199; the sequence is QYLQEKLPDEVVLKIFSYLLEQDLCRAACVCKRFSELANDPILWKRL. PbH1 repeat units follow at residues 395–417, 418–440, 441–463, 464–486, 487–509, 510–532, 533–555, 556–578, 579–601, 602–624, 625–647, 648–670, 671–693, 694–716, 717–739, 740–762, 763–785, 786–808, and 809–830; these read GACPTIKHCNISDCENVGLYITD, HAQGIYEDNEISNNALAGIWVKN, HGNPIIRRNHIHHGRDVGVFTFD, HGMGYFESCNIHRNRIAGFEVKA, YANPTVVRCEIHHGQTGGIYVHE, KGRGQFIENKIYANNFAGVWITS, NSDPTIRGNSIFNGNQGGVYIFG, DGRGLIEGNDIYGNALAGIQIRT, NSCPIVRHNKIHDGQHGGIYVHE, KGQGVIEENEVYSNTLAGVWVTT, GSTPVLRRNRIHSGKQVGVYFYD, NGHGVLEDNDIYNHMYSGVQIRT, GSNPKIRRNKIWGGQNGGILVYN, SGLGCIEDNEIFDNAMAGVWIKT, DSNPTLRRNKIHDGRDGGICIFN, GGRGLLEENDIFRNAQAGVLIST, NSHPILRKNRIFDGFAAGIEITN, HATATLEGNQIFNNRFGGLFLAS, and GVNVTMKDNKIMNNQDAIEKAV. The UBR-type zinc-finger motif lies at 833 to 904; that stretch reads GQCLYKISSY…LSNPCTLAGE (72 aa).

In terms of assembly, component of the SCF(FBXO11) complex consisting of CUL1, RBX1, SKP1 and FBXO11. Interacts with CIITA. In terms of tissue distribution, isoform 5 is expressed in keratinocytes, fibroblasts and melanocytes.

It localises to the nucleus. Its subcellular location is the chromosome. It functions in the pathway protein modification; protein ubiquitination. Functionally, substrate recognition component of a SCF (SKP1-CUL1-F-box protein) E3 ubiquitin-protein ligase complex which mediates the ubiquitination and subsequent proteasomal degradation of target proteins, such as DTL/CDT2, BCL6, SNAI1 and PRDM1/BLIMP1. The SCF(FBXO11) complex mediates ubiquitination and degradation of BCL6, thereby playing a role in the germinal center B-cells terminal differentiation toward memory B-cells and plasma cells. The SCF(FBXO11) complex also mediates ubiquitination and degradation of DTL, an important step for the regulation of TGF-beta signaling, cell migration and the timing of the cell-cycle progression and exit. The SCF(FBXO11) complex also catalyzes ubiquitination and degradation of GSK3B-phosphorylated SNAI1. Binds to and neddylates phosphorylated p53/TP53, inhibiting its transcriptional activity. Plays a role in the regulatiom of erythropoiesis but not myelopoiesis or megakaryopoiesis. Mechanistically, activates erythroid genes by mediating the degradation of BAHD1, a heterochromatin-associated protein that recruits corepressors to H3K27me3 marks. Participates in macrophage cell death and inflammation in response to bacterial toxins by regulating the expression of complement 5a receptor 1/C5AR1 and IL-1beta. Acts as a critical regulator to determine the level of MHC-II by mediating the recognition of degron at the P/S/T domain of CIITA leading to its ubiquitination and subsequent degradation via the proteasome. Participates in the antiviral repsonse by initiating the activation of TBK1-IRF3-IFN-I axis. Mediates the 'Lys-63'-linked ubiquitination of TRAF3 to strengthen the interaction between TRAF3 and TBK1. This chain is F-box only protein 11, found in Homo sapiens (Human).